The primary structure comprises 188 residues: dCTP deaminase (188 aa).

DCTP-binding positions include 111-116 (KSTYAR), 135-137 (TLE), Q156, Y170, and Q180. The active-site Proton donor/acceptor is E137.

The protein belongs to the dCTP deaminase family. As to quaternary structure, homotrimer.

The enzyme catalyses dCTP + H2O + H(+) = dUTP + NH4(+). It participates in pyrimidine metabolism; dUMP biosynthesis; dUMP from dCTP (dUTP route): step 1/2. Its function is as follows. Catalyzes the deamination of dCTP to dUTP. The chain is dCTP deaminase from Cupriavidus metallidurans (strain ATCC 43123 / DSM 2839 / NBRC 102507 / CH34) (Ralstonia metallidurans).